The primary structure comprises 407 residues: MVIILKKTLEKKGADDVIASRANLGPFQAQTMSQGAALFSCGLMETSRWHDSCSIRQRPVGTSLESLWDVLPEVHSGSAQWDWDVGSASSTLTSLLQDLSLTESSSHSTAPPSKKQCRSLSCSDELGGCRSTWRPQGSRVWTTVEKRRCHSGGSVQRSSGGNLQLGFPAMQRSFSFSLPARSNAVEPPSFTQRLPYAFTSLTHSSSMPLASDPPAQPLSLSNEQICFPEPHGPSPSSSPDSTPELERRSGQGGLARSRSQPCELNEKKIGVKRRRPDDTHKQRPSLDLAKMTQKLHSFHSLSCPGITGEETCESEATPPPRSVQQRDAVDSPAHEHNLKDFQPQEGDFNGNKSSDPITEEVDWNCDDGTPETSNGKDTEPLWVGLCSMKRDVYQLGGELDIEQIERN.

2 disordered regions span residues 204 to 286 (SSSM…RPSL) and 306 to 380 (ITGE…DTEP). Basic and acidic residues-rich tracts occupy residues 264–281 (LNEK…DTHK) and 327–339 (DAVD…HNLK). The Nuclear localization signal motif lies at 272–275 (KRRR). Residues 357-369 (ITEEVDWNCDDGT) show a composition bias toward acidic residues.

It belongs to the FAM53 family. Interacts with ctnnb1. Predominantly expressed in proliferating cells throughout embryonic development.

Its subcellular location is the nucleus. Functionally, acts as a regulator of Wnt signaling pathway by regulating beta-catenin (ctnnb1) nuclear localization. The protein is Protein FAM53B of Oryzias latipes (Japanese rice fish).